Consider the following 226-residue polypeptide: 7-cyano-7-deazaguanine synthase (226 aa).

Residue 7 to 17 (LSGGMDSLVTT) participates in ATP binding. Cys187, Cys195, Cys198, and Cys201 together coordinate Zn(2+).

This sequence belongs to the QueC family. The cofactor is Zn(2+).

It carries out the reaction 7-carboxy-7-deazaguanine + NH4(+) + ATP = 7-cyano-7-deazaguanine + ADP + phosphate + H2O + H(+). The protein operates within purine metabolism; 7-cyano-7-deazaguanine biosynthesis. Its function is as follows. Catalyzes the ATP-dependent conversion of 7-carboxy-7-deazaguanine (CDG) to 7-cyano-7-deazaguanine (preQ(0)). This Chlorobium phaeobacteroides (strain DSM 266 / SMG 266 / 2430) protein is 7-cyano-7-deazaguanine synthase.